The sequence spans 306 residues: Cell division protein ZipA (306 aa).

Over 1–6 the chain is Periplasmic; that stretch reads MENLQL. The helical transmembrane segment at 7–27 threads the bilayer; it reads VLLLIGAIAIIAVLVHGFWSI. The Cytoplasmic segment spans residues 28-306; that stretch reads RKQQPKGYKQ…NYIQRIRAQA (279 aa).

This sequence belongs to the ZipA family. Interacts with FtsZ via their C-terminal domains.

The protein localises to the cell inner membrane. In terms of biological role, essential cell division protein that stabilizes the FtsZ protofilaments by cross-linking them and that serves as a cytoplasmic membrane anchor for the Z ring. Also required for the recruitment to the septal ring of downstream cell division proteins. This Shewanella halifaxensis (strain HAW-EB4) protein is Cell division protein ZipA.